Here is a 478-residue protein sequence, read N- to C-terminus: Succinyl-CoA:acetate/propanoyl-CoA:succinate CoA transferase (478 aa).

A mitochondrion-targeting transit peptide spans 1-30 (MYQLAFLRCRYASPIVREARRAFHASRKCQ). Residue 256–260 (GIGAI) participates in CoA binding. Glutamate 279 serves as the catalytic 5-glutamyl coenzyme A thioester intermediate. CoA is bound by residues isoleucine 354, glycine 377, and lysine 404.

It belongs to the acetyl-CoA hydrolase/transferase family.

The protein localises to the mitochondrion. The enzyme catalyses succinyl-CoA + acetate = succinate + acetyl-CoA. It catalyses the reaction propanoyl-CoA + succinate = propanoate + succinyl-CoA. In terms of biological role, transferase involved in anaerobic fumarate-respiration in the mitochondria. Catalyzes the transfer of the CoA moiety of acetyl-CoA or propionyl-CoA to succinate, thereby forming acetate and propionate, respectively. Acetate and propionate are the two major metabolic end products in the anaerobic mitochondrial metabolism of F.hepatica. Also displays CoA transferase activities from acetyl-CoA to propionate, acetate and butyrate. This Fasciola hepatica (Liver fluke) protein is Succinyl-CoA:acetate/propanoyl-CoA:succinate CoA transferase.